Here is a 300-residue protein sequence, read N- to C-terminus: 33 kDa chaperonin (300 aa).

2 disulfides stabilise this stretch: Cys-235–Cys-237 and Cys-269–Cys-272.

This sequence belongs to the HSP33 family. Under oxidizing conditions two disulfide bonds are formed involving the reactive cysteines. Under reducing conditions zinc is bound to the reactive cysteines and the protein is inactive.

Its subcellular location is the cytoplasm. Its function is as follows. Redox regulated molecular chaperone. Protects both thermally unfolding and oxidatively damaged proteins from irreversible aggregation. Plays an important role in the bacterial defense system toward oxidative stress. The protein is 33 kDa chaperonin of Pseudomonas savastanoi pv. phaseolicola (strain 1448A / Race 6) (Pseudomonas syringae pv. phaseolicola (strain 1448A / Race 6)).